The primary structure comprises 1010 residues: Retinoblastoma-related protein 3 (1010 aa).

The tract at residues 416-616 (TPVSTAMTTA…EKGSSMYNSL (201 aa)) is domain A. The segment at 416 to 858 (TPVSTAMTTA…NEVFIPAVKS (443 aa)) is pocket. Residues 617–727 (IVARPALSVE…PAAGGETCAE (111 aa)) are spacer. A domain B region spans residues 728–858 (TGIGVFFSKI…NEVFIPAVKS (131 aa)). Disordered regions lie at residues 867–889 (ASAS…FPES) and 986–1010 (GSDR…PSDS).

It belongs to the retinoblastoma protein (RB) family.

It localises to the nucleus. Its function is as follows. Regulator of biological processes that recruits a histone deacetylase to control gene transcription. May play a role in the entry into mitosis, negatively regulating the cell proliferation. Formation of stable complexes with geminiviridae replication-associated proteins may create a cellular environment which favors viral DNA replication. The polypeptide is Retinoblastoma-related protein 3 (RBR3) (Zea mays (Maize)).